We begin with the raw amino-acid sequence, 474 residues long: Hepatocyte nuclear factor 4-alpha (474 aa).

Positions 57–132 (SALCAICGDR…AGMKKEAVQN (76 aa)) form a DNA-binding region, nuclear receptor. NR C4-type zinc fingers lie at residues 60–80 (CAIC…CDGC) and 96–120 (CRFS…LKKC). Phosphoserine; by PKA is present on residues serine 142 and serine 143. A Phosphotyrosine modification is found at tyrosine 144. An NR LBD domain is found at 147 to 377 (SSLPSINALL…NLLQEMLLGG (231 aa)). Threonine 166 carries the post-translational modification Phosphothreonine. At serine 167 the chain carries Phosphoserine. Glycyl lysine isopeptide (Lys-Gly) (interchain with G-Cter in ubiquitin) cross-links involve residues lysine 234 and lysine 307. Serine 313 carries the phosphoserine; by AMPK modification. The short motif at 368-376 (NLLQEMLLG) is the 9aaTAD element. The tract at residues 413-450 (SNGQMCEWPRPRGQAATPETPQPSPPSGSGSESYKLLP) is disordered. Threonine 429 and threonine 432 each carry phosphothreonine. Serine 436 carries the phosphoserine modification. An N6-acetyllysine modification is found at lysine 458.

The protein belongs to the nuclear hormone receptor family. NR2 subfamily. As to quaternary structure, homodimerization is required for HNF4-alpha to bind to its recognition site. Interacts with CLOCK, BMAL1, CRY1, CRY2, PER1 and PER2. Interacts with NR0B2/SHP; the resulting heterodimer is transcriptionally inactive. Interacts with DDX3X; this interaction disrupts the interaction between HNF4 and NR0B2 that forms inactive heterodimers and enhances the formation of active HNF4 homodimers. Post-translationally, phosphorylation at Ser-313 by AMPK reduces the ability to form homodimers and bind DNA. Phosphorylated in the recognition sequence R-R-S-S near the DNA-binding domain; phosphorylation results in decrease in DNA-binding activity. Phosphorylation of HNF4 depends on the diet and is decreased by a carbohydrate-rich diet and is increased by fasting. In terms of processing, the N-terminus is blocked. Acetylation at Lys-458 lowers transcriptional activation by about two-fold. In terms of tissue distribution, liver, kidney and intestine.

The protein resides in the nucleus. In terms of biological role, transcriptional regulator which controls the expression of hepatic genes during the transition of endodermal cells to hepatic progenitor cells, facilitating the recruitment of RNA pol II to the promoters of target genes. Activates the transcription of CYP2C38. Represses the CLOCK-BMAL1 transcriptional activity and is essential for circadian rhythm maintenance and period regulation in the liver and colon cells. This is Hepatocyte nuclear factor 4-alpha (Hnf4a) from Rattus norvegicus (Rat).